Here is a 384-residue protein sequence, read N- to C-terminus: MSSYLFTSESVSEGHPDKIADQISDAVLDEILRQDPKARVACETYVKTGMALVGGEITTSAWVDIENLTRQVICDIGYKHSDIGFDGHSCAVLNAIGKQSSDINQGVDRESPLDQGAGDQGIMFGYATNETDVLMPAAITYAHRLMERQAQVRKKGILDWLRPDAKSQVTLKYEDNRIVGIDAVVLSTQHSDNVDQKTVHEGVMEEIIKPILPAEWLSKETKYFINPTGRFVIGGPMGDCGLTGRKIIVDTYGGAARHGGGAFSGKDPSKVDRSAAYAARYVAKNIVAAGLADRCEIQLSYAIGVAEPTSIMVETFGTGKVANELLVGLIREFFDLRPYGLIKMLDLIQPIYRQTAAYGHFGRAQFPWEKVDRAEELRAAASLK.

His15 is a binding site for ATP. Asp17 is a Mg(2+) binding site. Position 43 (Glu43) interacts with K(+). Residues Glu56 and Gln99 each coordinate L-methionine. The flexible loop stretch occupies residues 99 to 109 (QSSDINQGVDR). Residues 164 to 166 (DAK), 230 to 231 (RF), Asp239, 245 to 246 (RK), Ala262, and Lys266 each bind ATP. Asp239 contacts L-methionine. Lys270 contributes to the L-methionine binding site.

It belongs to the AdoMet synthase family. In terms of assembly, homotetramer; dimer of dimers. The cofactor is Mg(2+). It depends on K(+) as a cofactor.

It localises to the cytoplasm. The enzyme catalyses L-methionine + ATP + H2O = S-adenosyl-L-methionine + phosphate + diphosphate. Its pathway is amino-acid biosynthesis; S-adenosyl-L-methionine biosynthesis; S-adenosyl-L-methionine from L-methionine: step 1/1. Its function is as follows. Catalyzes the formation of S-adenosylmethionine (AdoMet) from methionine and ATP. The overall synthetic reaction is composed of two sequential steps, AdoMet formation and the subsequent tripolyphosphate hydrolysis which occurs prior to release of AdoMet from the enzyme. This is S-adenosylmethionine synthase from Histophilus somni (strain 129Pt) (Haemophilus somnus).